Consider the following 258-residue polypeptide: Tryptophan synthase alpha chain (258 aa).

Residues Glu44 and Asp55 each act as proton acceptor in the active site.

It belongs to the TrpA family. In terms of assembly, tetramer of two alpha and two beta chains.

The catalysed reaction is (1S,2R)-1-C-(indol-3-yl)glycerol 3-phosphate + L-serine = D-glyceraldehyde 3-phosphate + L-tryptophan + H2O. It participates in amino-acid biosynthesis; L-tryptophan biosynthesis; L-tryptophan from chorismate: step 5/5. Its function is as follows. The alpha subunit is responsible for the aldol cleavage of indoleglycerol phosphate to indole and glyceraldehyde 3-phosphate. The chain is Tryptophan synthase alpha chain from Petrotoga mobilis (strain DSM 10674 / SJ95).